A 388-amino-acid polypeptide reads, in one-letter code: Processive diacylglycerol beta-glucosyltransferase (388 aa).

Belongs to the glycosyltransferase 28 family. UgtP subfamily.

Its subcellular location is the cell membrane. The enzyme catalyses a 1,2-diacyl-3-O-(beta-D-glucopyranosyl)-sn-glycerol + UDP-alpha-D-glucose = a 1,2-diacyl-3-O-(beta-D-Glc-(1-&gt;6)-beta-D-Glc)-sn-glycerol + UDP + H(+). It catalyses the reaction a 1,2-diacyl-3-O-(beta-D-Glc-(1-&gt;6)-beta-D-Glc)-sn-glycerol + UDP-alpha-D-glucose = a 1,2-diacyl-3-O-(beta-D-Glc-(1-&gt;6)-beta-D-Glc-(1-&gt;6)-beta-D-Glc)-sn-glycerol + UDP + H(+). The catalysed reaction is a 1,2-diacyl-sn-glycerol + UDP-alpha-D-glucose = a 1,2-diacyl-3-O-(beta-D-glucopyranosyl)-sn-glycerol + UDP + H(+). It participates in glycolipid metabolism; diglucosyl-diacylglycerol biosynthesis. Its function is as follows. Processive glucosyltransferase involved in the biosynthesis of both the bilayer- and non-bilayer-forming membrane glucolipids. Is able to successively transfer up to three glucosyl residues to diacylglycerol (DAG), thereby catalyzing the formation of beta-monoglucosyl-DAG (3-O-(beta-D-glucopyranosyl)-1,2-diacyl-sn-glycerol), beta-diglucosyl-DAG (3-O-(beta-D-glucopyranosyl-beta-(1-&gt;6)-D-glucopyranosyl)-1,2-diacyl-sn-glycerol) and beta-triglucosyl-DAG (3-O-(beta-D-glucopyranosyl-beta-(1-&gt;6)-D-glucopyranosyl-beta-(1-&gt;6)-D-glucopyranosyl)-1,2-diacyl-sn-glycerol). Beta-diglucosyl-DAG is the predominant glycolipid found in Bacillales and is also used as a membrane anchor for lipoteichoic acid (LTA). In Bacillus cereus (strain G9842), this protein is Processive diacylglycerol beta-glucosyltransferase.